A 91-amino-acid polypeptide reads, in one-letter code: Succinate dehydrogenase assembly factor 1A, mitochondrial (91 aa).

The protein belongs to the complex I LYR family. SDHAF1 subfamily. Interacts with the iron-sulfur protein subunit within the SDH catalytic dimer.

It localises to the mitochondrion matrix. Functionally, plays an essential role in the assembly of succinate dehydrogenase (SDH), an enzyme complex (also referred to as respiratory complex II) that is a component of both the tricarboxylic acid (TCA) cycle and the mitochondrial electron transport chain, and which couples the oxidation of succinate to fumarate with the reduction of ubiquinone (coenzyme Q) to ubiquinol. Promotes maturation of the iron-sulfur protein subunit of the SDH catalytic dimer, protecting it from the deleterious effects of oxidants. May act together with SDHAF3. This chain is Succinate dehydrogenase assembly factor 1A, mitochondrial, found in Dictyostelium discoideum (Social amoeba).